The sequence spans 438 residues: Thymidine phosphorylase (438 aa).

It belongs to the thymidine/pyrimidine-nucleoside phosphorylase family. Homodimer.

The catalysed reaction is thymidine + phosphate = 2-deoxy-alpha-D-ribose 1-phosphate + thymine. The protein operates within pyrimidine metabolism; dTMP biosynthesis via salvage pathway; dTMP from thymine: step 1/2. Functionally, the enzymes which catalyze the reversible phosphorolysis of pyrimidine nucleosides are involved in the degradation of these compounds and in their utilization as carbon and energy sources, or in the rescue of pyrimidine bases for nucleotide synthesis. The protein is Thymidine phosphorylase of Burkholderia lata (strain ATCC 17760 / DSM 23089 / LMG 22485 / NCIMB 9086 / R18194 / 383).